Here is a 32-residue protein sequence, read N- to C-terminus: MSDIN-like toxin proprotein 2 (32 aa).

A propeptide spanning residues 1–10 is cleaved from the precursor; it reads MSDINATRLP. The cyclopeptide (His-Pro) cross-link spans 11–17; that stretch reads HLVRYPP. Residues 18–32 constitute a propeptide that is removed on maturation; that stretch reads YVGDGTDLTLNRGEK.

Belongs to the MSDIN fungal toxin family. Processed by the macrocyclase-peptidase enzyme POPB to yield a toxic cyclic heptapeptide. POPB first removes 10 residues from the N-terminus. Conformational trapping of the remaining peptide forces the enzyme to release this intermediate rather than proceed to macrocyclization. The enzyme rebinds the remaining peptide in a different conformation and catalyzes macrocyclization of the N-terminal 7 residues.

In terms of biological role, probable toxin that belongs to the MSDIN-like toxin family responsible for a large number of food poisoning cases and deaths. The protein is MSDIN-like toxin proprotein 2 of Amanita fuligineoides.